A 143-amino-acid polypeptide reads, in one-letter code: Endoribonuclease YbeY (143 aa).

Positions 106, 110, and 116 each coordinate Zn(2+).

The protein belongs to the endoribonuclease YbeY family. It depends on Zn(2+) as a cofactor.

The protein localises to the cytoplasm. Its function is as follows. Single strand-specific metallo-endoribonuclease involved in late-stage 70S ribosome quality control and in maturation of the 3' terminus of the 16S rRNA. This is Endoribonuclease YbeY from Petrotoga mobilis (strain DSM 10674 / SJ95).